The chain runs to 27 residues: Caerulein precursor fragment R4 (27 aa).

Expressed by the skin glands.

The protein localises to the secreted. Its function is as follows. Antimicrobial peptide. The sequence is that of Caerulein precursor fragment R4 from Xenopus ruwenzoriensis (Uganda clawed frog).